A 188-amino-acid polypeptide reads, in one-letter code: MSYLVVTIKVILITGMPGSGKSEFAKLLKERGAKVIVMSDVVRKRYSIEAKPGERLMDFAKRLREIYGDGVVARLCVEELGTSNHDLVVFDGVRSLAEVEEFKRLLGDSVYIVAVHSPPKIRYKRIIERLRSDDSKEISELIRRDREELKLGIGEVIAMADYIITNDSNYEEFKRRCEEVTDRVLKNG.

ATP is bound at residue 15–22; it reads GMPGSGKS.

It belongs to the UPF0200 family.

In Saccharolobus islandicus (strain M.16.4 / Kamchatka #3) (Sulfolobus islandicus), this protein is UPF0200 protein M164_1169.